The primary structure comprises 779 residues: MTPEFDEEVVFENSPLYQYLQDLGHTDFEICSSLSPKTEKCTTEGQQKPPTRVLPKQGILLKVAETIKSWIFFSQCNKKDDLLHKLDIGFRLDSLHTILQQEVLLQEDVELIELLDPSILSAGQSQQQENGHLPTLCSLATPNIWDLSMLFAFISLLVMLPTWWIVSSWLVWGVILFVYLVIRALRLWRTAKLQVTLKKYSVHLEDMATNSRAFTNLVRKALRLIQETEVISRGFTLVSAACPFNKAGQHPSQHLIGLRKAVYRTLRANFQAARLATLYMLKNYPLNSESDNVTNYICVVPFKELGLGLSEEQISEEEAHNFTDGFSLPALKVLFQLWVAQSSEFFRRLALLLSTANSPPGPLLTPALLPHRILSDVTQGLPHAHSACLEELKRSYEFYRYFETQHQSVPQCLSKTQQKSRELNNVHTAVRSLQLHLKALLNEVIILEDELEKLVCTKETQELVSEAYPILEQKLKLIQPHVQASNNCWEEAISQVDKLLRRNTDKKGKPEIACENPHCTVVPLKQPTLHIADKDPIPEEQELEAYVDDIDIDSDFRKDDFYYLSQEDKERQKREHEESKRVLQELKSVLGFKASEAERQKWKQLLFSDHAVLKSLSPVDPVEPISNSEPSMNSDMGKVSKNDTEEESNKSATTDNEISRTEYLCENSLEGKNKDNSSNEVFPQGAEERMCYQCESEDEPQADGSGLTTAPPTPRDSLQPSIKQRLARLQLSPDFTFTAGLAAEVAARSLSFTTMQEQTFGGEEEEQIIEENKNEIEEK.

The next 2 helical transmembrane spans lie at 139–159 (LATP…LLVM) and 162–182 (TWWI…YLVI). Residues 430–462 (VRSLQLHLKALLNEVIILEDELEKLVCTKETQE) are a coiled coil. Disordered regions lie at residues 618–719 (PVDP…DSLQ) and 757–779 (EQTF…IEEK). Positions 625–634 (ISNSEPSMNS) are enriched in polar residues. A compositionally biased stretch (basic and acidic residues) spans 638–649 (KVSKNDTEEESN). Over residues 706–719 (GLTTAPPTPRDSLQ) the composition is skewed to polar residues. The segment covering 770-779 (EENKNEIEEK) has biased composition (basic and acidic residues).

Belongs to the vezatin family. Interacts with USH2A (via the cytoplasmic region); the interaction associates VEZT with the USH2 complex at the stereocilia base. Interacts with myosin MYO7A and the cadherin-catenins complex.

The protein localises to the cell membrane. Its subcellular location is the cell projection. The protein resides in the stereocilium membrane. It localises to the cell junction. It is found in the adherens junction. The protein localises to the nucleus. Its subcellular location is the cytoplasmic vesicle. The protein resides in the secretory vesicle. It localises to the acrosome. Functionally, plays a pivotal role in the establishment of adherens junctions and their maintenance in adult life. Required for morphogenesis of the preimplantation embryo, and for the implantation process. Its function is as follows. (Microbial infection) In case of Listeria infection, promotes bacterial internalization by participating in myosin VIIa recruitment to the entry site. This chain is Vezatin (VEZT), found in Homo sapiens (Human).